The chain runs to 669 residues: Acyl-coenzyme A oxidase 1 (669 aa).

2 residues coordinate FAD: threonine 152 and glycine 191. The active-site Proton acceptor is the glutamate 434. At tyrosine 544 the chain carries Phosphotyrosine. A Phosphoserine modification is found at serine 551. The Microbody targeting signal signature appears at 667 to 669 (AHL).

This sequence belongs to the acyl-CoA oxidase family. As to quaternary structure, homodimer. FAD serves as cofactor. As to expression, expressed in glia.

The protein resides in the peroxisome. It localises to the nucleus. It catalyses the reaction a 2,3-saturated acyl-CoA + O2 = a (2E)-enoyl-CoA + H2O2. It functions in the pathway lipid metabolism; peroxisomal fatty acid beta-oxidation. Catalyzes the desaturation of acyl-CoAs to 2-trans-enoyl-CoAs. First enzyme of the fatty acid beta-oxidation pathway. This is Acyl-coenzyme A oxidase 1 from Drosophila melanogaster (Fruit fly).